The following is a 618-amino-acid chain: Proline--tRNA ligase (618 aa).

This sequence belongs to the class-II aminoacyl-tRNA synthetase family. ProS type 1 subfamily. Homodimer.

It localises to the cytoplasm. It catalyses the reaction tRNA(Pro) + L-proline + ATP = L-prolyl-tRNA(Pro) + AMP + diphosphate. Functionally, catalyzes the attachment of proline to tRNA(Pro) in a two-step reaction: proline is first activated by ATP to form Pro-AMP and then transferred to the acceptor end of tRNA(Pro). As ProRS can inadvertently accommodate and process non-cognate amino acids such as alanine and cysteine, to avoid such errors it has two additional distinct editing activities against alanine. One activity is designated as 'pretransfer' editing and involves the tRNA(Pro)-independent hydrolysis of activated Ala-AMP. The other activity is designated 'posttransfer' editing and involves deacylation of mischarged Ala-tRNA(Pro). The misacylated Cys-tRNA(Pro) is not edited by ProRS. The chain is Proline--tRNA ligase from Streptococcus pyogenes serotype M12 (strain MGAS2096).